The sequence spans 1829 residues: Sodium channel protein type 4 subunit alpha A (1829 aa).

Residues 1–124 (MARLLPPTGT…RGAIKILIHS (124 aa)) lie on the Cytoplasmic side of the membrane. The disordered stretch occupies residues 32–52 (STREELEGAEEEPQAPSSDLE). Residues 106–421 (CISPFSIVRR…VVAMAYDEQN (316 aa)) form an I repeat. The chain crosses the membrane as a helical span at residues 125–143 (LFSMFIMITILSNCVFMTM). Residues 144 to 150 (SNPPAWS) are Extracellular-facing. The helical transmembrane segment at 151–171 (KTVEYVFTGIYTFEATVKVLS) threads the bilayer. The Cytoplasmic segment spans residues 172 to 185 (RGFCIGPFTFLRDP). Residues 186-203 (WNWLDFMVISMAYVTEFV) form a helical membrane-spanning segment. The Extracellular portion of the chain corresponds to 204 to 209 (DLGNVS). N-linked (GlcNAc...) asparagine glycosylation is present at Asn207. Residues 210–226 (ALRTFRVLRALKTITVI) traverse the membrane as a helical segment. Topologically, residues 227–245 (PGLKTIVGALIQSVKKMID) are cytoplasmic. The chain crosses the membrane as a helical span at residues 246–265 (VMILTIFALAVFALIGLQLF). Topologically, residues 266–358 (MGNLRQKCIR…PNYGYTSYDN (93 aa)) are extracellular. A disulfide bridge links Cys273 with Cys327. N-linked (GlcNAc...) asparagine glycosylation is found at Asn280, Asn293, and Asn329. A disulfide bridge connects residues Cys336 and Cys342. An intramembrane region (pore-forming) is located at residues 359 to 383 (FGWAFLALFRLMTQDFWENLFQLTL). The Extracellular portion of the chain corresponds to 384–390 (RAAGKTY). Residues 391–411 (MIFFVVVIFLGSFYLINLILA) traverse the membrane as a helical segment. The Cytoplasmic portion of the chain corresponds to 412-582 (VVAMAYDEQN…KWVHFVVMDP (171 aa)). Residues 446-467 (ETGSKASLASQKTQSRGSNRTG) are compositionally biased toward polar residues. A disordered region spans residues 446–468 (ETGSKASLASQKTQSRGSNRTGS). Residues 564 to 836 (CCAPWILFKK…QIAIGRITRG (273 aa)) form an II repeat. Residues 583 to 601 (FVDLGITICIVLNTLFMAM) traverse the membrane as a helical segment. Over 602-612 (EHYPMSPHFEH) the chain is Extracellular. A helical membrane pass occupies residues 613 to 632 (VLSVGNLVFTGIFTAEMVFK). Residues 633–646 (LIAMDPYYYFQVGW) are Cytoplasmic-facing. A helical transmembrane segment spans residues 647–666 (NIFDSIIVTLSLVELGLANV). At 667-668 (QG) the chain is on the extracellular side. Residues 669 to 686 (LSVLRSFRLLRVFKLAKS) traverse the membrane as a helical segment. The Cytoplasmic portion of the chain corresponds to 687–702 (WPTLNMLIKIIGNSVG). The helical transmembrane segment at 703 to 721 (ALGNLTLVLAIIVFIFAVV) threads the bilayer. The Extracellular segment spans residues 722 to 750 (GMQLFGKSYKDCVCKISEDCELPRWHMND). Cysteines 735 and 741 form a disulfide. Positions 751 to 771 (FFHSFLIVFRILCGEWIETMW) form an intramembrane region, pore-forming. The Extracellular segment spans residues 772-782 (DCMEVAGASMC). A disulfide bridge links Cys773 with Cys782. A helical membrane pass occupies residues 783 to 801 (LIVFMMVMVIGNLVVLNLF). Topologically, residues 802-998 (LALLLSSFSG…TCFTIVEHDY (197 aa)) are cytoplasmic. Positions 901–957 (SDVEEDEDSESSDEEDAKATLNDGDSSVCSTVDYQPPEPEPEPEEVEEEEPEPEEPE) are disordered. Positions 902-916 (DVEEDEDSESSDEED) are enriched in acidic residues. Positions 923-933 (DGDSSVCSTVD) are enriched in polar residues. The span at 939–957 (PEPEPEEVEEEEPEPEEPE) shows a compositional bias: acidic residues. The III repeat unit spans residues 979–1292 (WGKKWWNLRR…KKYYNAMKKL (314 aa)). Residues 999–1016 (FETFIIFMILLSSGALAF) form a helical membrane-spanning segment. Residues 1017-1029 (EDINIERRRVIKT) are Extracellular-facing. The chain crosses the membrane as a helical span at residues 1030 to 1048 (ILEYADKVFTYIFIVEMLL). Over 1049 to 1062 (KWVAYGFKTYFTNA) the chain is Cytoplasmic. A helical membrane pass occupies residues 1063-1081 (WCWLDFLIVDVSLVSLTAN). The Extracellular segment spans residues 1082–1089 (LMGYSELG). The chain crosses the membrane as a helical span at residues 1090–1108 (AIKSLRTLRALRPLRALSR). At 1109–1125 (FEGMRVVVNALVGAIPS) the chain is on the cytoplasmic side. Residues 1126-1145 (IFNVLLVCLIFWLIFSIMGV) form a helical membrane-spanning segment. The Extracellular portion of the chain corresponds to 1146-1196 (NLFAGKFYHCINTTTEERIPMDVVNNKSDCMALMYTNEVRWVNVKVNYDNV). A disulfide bridge connects residues Cys1155 and Cys1175. 2 N-linked (GlcNAc...) asparagine glycosylation sites follow: Asn1157 and Asn1171. The pore-forming intramembrane region spans 1197–1218 (GLGYLSLLQIATFKGWMDIMYA). Residues 1219 to 1235 (AVDSREVDEQPSYEINL) lie on the Extracellular side of the membrane. A helical membrane pass occupies residues 1236-1257 (YMYLYFVIFIIFGSFFTLNLFI). The Cytoplasmic segment spans residues 1258–1320 (GVIIDNFNQQ…LVFDFISKQF (63 aa)). Residues 1276 to 1278 (IFM) are important for rapid channel inactivation. One copy of the IV repeat lies at 1301-1599 (IPRPSNIIQG…WEKFDVDATQ (299 aa)). The chain crosses the membrane as a helical span at residues 1321–1338 (FDIFIMVLICLNMVTMMI). Topologically, residues 1339–1349 (ETDDQSAEKEY) are extracellular. A helical membrane pass occupies residues 1350–1368 (VLYQINLVFIVVFTSECVL). At 1369–1380 (KLFALRQYFFTI) the chain is on the cytoplasmic side. Residues 1381 to 1398 (GWNVFDFVVVILSIAGLM) form a helical membrane-spanning segment. Residues 1399–1411 (LSDIIEKYFVSPT) are Extracellular-facing. A helical membrane pass occupies residues 1412–1428 (LFRVIRLARIGRVLRLI). Topologically, residues 1429-1447 (RGAKGIRTLLFALMMSLPA) are cytoplasmic. Residues 1448 to 1465 (LFNIGLLLFLIMFIFSIF) traverse the membrane as a helical segment. The Extracellular portion of the chain corresponds to 1466–1487 (GMSNFAYVKKQAGIDDIFNFET). The pore-forming intramembrane region spans 1488–1510 (FGGSIICLFEITTSAGWDGLLLP). The Extracellular segment spans residues 1511–1540 (ILNSGPPDCDPDFENPGTDVRGNCGNPGMG). Cys1519 and Cys1534 are disulfide-bonded. Residues 1541–1563 (IMFFCSYIIMSFLVVVNMYIAII) form a helical membrane-spanning segment. Residues 1564–1829 (LENFNNAQEE…NATTIKESIV (266 aa)) are Cytoplasmic-facing. The 30-residue stretch at 1693 to 1722 (EERAAIAVQRIYRRHLLKRAIRYACFMRRS) folds into the IQ domain. The segment at 1765-1786 (PMRPNSQPPKPSQVTQTRASVT) is disordered.

It belongs to the sodium channel (TC 1.A.1.10) family. Nav1.4/SCN4A subfamily. Voltage-gated sodium (Nav) channels consist of an ion-conducting alpha subunit which is functional on its own associated with regulatory beta subunits. Expressed in skeletal muscle, brain, spinal cord, and eye.

It localises to the cell membrane. The enzyme catalyses Na(+)(in) = Na(+)(out). Its function is as follows. Pore-forming subunit of a voltage-gated sodium (Nav) channel that directly mediates the depolarizing phase of action potentials in excitable membranes. Navs, also called VGSCs (voltage-gated sodium channels) or VDSCs (voltage-dependent sodium channels), operate by switching between closed and open conformations depending on the voltage difference across the membrane. In the open conformation they allow Na(+) ions to selectively pass through the pore, along their electrochemical gradient. The influx of Na+ ions provokes membrane depolarization, initiating the propagation of electrical signals throughout cells and tissues. The protein is Sodium channel protein type 4 subunit alpha A (scn4aa) of Danio rerio (Zebrafish).